A 129-amino-acid chain; its full sequence is UPF0325 protein HCH_00487 (129 aa).

The protein belongs to the UPF0325 family.

The protein is UPF0325 protein HCH_00487 of Hahella chejuensis (strain KCTC 2396).